The sequence spans 230 residues: U2 small nuclear ribonucleoprotein A' (230 aa).

5 LRR repeats span residues 15–36, 48–69, 71–92, 93–114, and 115–136; these read SLRN…NADT, GDRE…GVTE, HYTS…PRLE, TLRT…KNIA, and KLET…ESLK. In terms of domain architecture, LRRCT spans 149–187; that stretch reads NPVQHVPRYRSYMISILPSLRMLDFQRVTQKERDEAEAM.

Belongs to the U2 small nuclear ribonucleoprotein A family. Associated with the spliceosome.

It is found in the nucleus. Involved in pre-mRNA splicing. This Yarrowia lipolytica (strain CLIB 122 / E 150) (Yeast) protein is U2 small nuclear ribonucleoprotein A' (LEA1).